We begin with the raw amino-acid sequence, 86 residues long: MKILIIFVIAITVVGVQSKDGYPIYSTGKSKGCKIECVINNKYCDKECTLKGGSSGYCYFWKLACYCEGLPDSVAVWTYAENTCGR.

A signal peptide spans 1–18 (MKILIIFVIAITVVGVQS). In terms of domain architecture, LCN-type CS-alpha/beta spans 19–85 (KDGYPIYSTG…VWTYAENTCG (67 aa)). Disulfide bonds link Cys33-Cys84, Cys37-Cys58, Cys44-Cys65, and Cys48-Cys67. Position 84 is a cysteine amide (Cys84).

Belongs to the long (4 C-C) scorpion toxin superfamily. Sodium channel inhibitor family. Beta subfamily. As to expression, expressed by the venom gland.

The protein resides in the secreted. Binds voltage-independently at site-4 of sodium channels (Nav) and shift the voltage of activation toward more negative potentials thereby affecting sodium channel activation and promoting spontaneous and repetitive firing. The protein is Neurotoxin LmNaTx1 of Lychas mucronatus (Chinese swimming scorpion).